We begin with the raw amino-acid sequence, 369 residues long: Olfactory receptor 2T1 (369 aa).

At 1-76 the chain is on the extracellular side; sequence MWQEYYFLNV…LFNRKETSGL (76 aa). N-linked (GlcNAc...) asparagine glycosylation occurs at Asn-56. A helical membrane pass occupies residues 77 to 97; the sequence is IFAIISIIFFTALMANGVMIF. Residues 98-107 are Cytoplasmic-facing; it reads LIQTDLRLHT. The chain crosses the membrane as a helical span at residues 108–128; the sequence is PMYFLLSHLSLIDMMYISTIV. The Extracellular segment spans residues 129–148; sequence PKMLVNYLLDQRTISFVGCT. Cysteines 147 and 239 form a disulfide. Residues 149-169 traverse the membrane as a helical segment; sequence AQHFLYLTLVGAEFFLLGLMA. Topologically, residues 170 to 191 are cytoplasmic; sequence YDRYVAICNPLRYPVLMSRRVC. A helical transmembrane segment spans residues 192 to 212; it reads WMIIAGSWFGGSLDGFLLTPI. The Extracellular portion of the chain corresponds to 213–247; it reads TMSFPFCNSREINHFFCEAPAVLKLACADTALYET. The chain crosses the membrane as a helical span at residues 248–268; sequence VMYVCCVLMLLIPFSVVLASY. The Cytoplasmic portion of the chain corresponds to 269–286; it reads ARILTTVQCMSSVEGRKK. The helical transmembrane segment at 287 to 307 threads the bilayer; the sequence is AFATCSSHMTVVSLFYGAAMY. At 308 to 321 the chain is on the extracellular side; the sequence is TYMLPHSYHKPAQD. The helical transmembrane segment at 322 to 342 threads the bilayer; sequence KVLSVFYTILTPMLNPLIYSL. The Cytoplasmic segment spans residues 343 to 369; that stretch reads RNKDVTGALKRALGRFKGPQRVSGGVF.

It belongs to the G-protein coupled receptor 1 family.

It localises to the cell membrane. Odorant receptor. In Homo sapiens (Human), this protein is Olfactory receptor 2T1 (OR2T1).